Here is a 423-residue protein sequence, read N- to C-terminus: Ferrochelatase, mitochondrial (423 aa).

Residues 1 to 29 constitute a mitochondrion transit peptide; that stretch reads MISRKIISTINSKTFYNKSLSYCTVNNNK. Cys-173 contacts [2Fe-2S] cluster. Active-site residues include His-207 and Asp-380. Residues Cys-401, Cys-404, and Cys-411 each contribute to the [2Fe-2S] cluster site.

The protein belongs to the ferrochelatase family. In terms of assembly, monomer. Requires [2Fe-2S] cluster as cofactor.

Its subcellular location is the mitochondrion inner membrane. The catalysed reaction is heme b + 2 H(+) = protoporphyrin IX + Fe(2+). It participates in porphyrin-containing compound metabolism; protoheme biosynthesis; protoheme from protoporphyrin-IX: step 1/1. In terms of biological role, catalyzes the ferrous insertion into protoporphyrin IX. This Dictyostelium discoideum (Social amoeba) protein is Ferrochelatase, mitochondrial (hemH).